Reading from the N-terminus, the 240-residue chain is Phosducin-like protein 2 (240 aa).

The Phosducin domain maps to 54-214 (QRDKKIDDMS…MLGQAGAVPT (161 aa)). Residues Ser63 and Ser73 each carry the phosphoserine modification. The interval 99–240 (FGSVREISGQ…DLEDKSSDFY (142 aa)) is thioredoxin fold.

This sequence belongs to the phosducin family.

It is found in the cytoplasm. In terms of biological role, modulates the activation of caspases during apoptosis. The protein is Phosducin-like protein 2 of Drosophila melanogaster (Fruit fly).